A 316-amino-acid polypeptide reads, in one-letter code: Transaldolase (316 aa).

K125 (schiff-base intermediate with substrate) is an active-site residue.

This sequence belongs to the transaldolase family. Type 1 subfamily. As to quaternary structure, homodimer.

It is found in the cytoplasm. It catalyses the reaction D-sedoheptulose 7-phosphate + D-glyceraldehyde 3-phosphate = D-erythrose 4-phosphate + beta-D-fructose 6-phosphate. It functions in the pathway carbohydrate degradation; pentose phosphate pathway; D-glyceraldehyde 3-phosphate and beta-D-fructose 6-phosphate from D-ribose 5-phosphate and D-xylulose 5-phosphate (non-oxidative stage): step 2/3. Functionally, transaldolase is important for the balance of metabolites in the pentose-phosphate pathway. In Acidovorax sp. (strain JS42), this protein is Transaldolase.